Reading from the N-terminus, the 225-residue chain is Membrin-11 (225 aa).

At alanine 2 the chain carries N-acetylalanine. Residues 2–200 (ASGIVEGGGS…VLRLIERRNR (199 aa)) lie on the Cytoplasmic side of the membrane. A helical; Anchor for type IV membrane protein transmembrane segment spans residues 201-221 (VDTWIKYAGMIATLVILYLFI). Residues 222 to 225 (RWTR) lie on the Vesicular side of the membrane.

It belongs to the GOSR2 family.

The protein resides in the golgi apparatus membrane. Functionally, involved in transport of proteins from the cis/medial-Golgi to the trans-Golgi network. In Arabidopsis thaliana (Mouse-ear cress), this protein is Membrin-11 (MEMB11).